The chain runs to 240 residues: Ribonuclease PH (240 aa).

Phosphate contacts are provided by residues Arg-87 and 125–127; that span reads GTR.

The protein belongs to the RNase PH family. Homohexameric ring arranged as a trimer of dimers.

The catalysed reaction is tRNA(n+1) + phosphate = tRNA(n) + a ribonucleoside 5'-diphosphate. Its function is as follows. Phosphorolytic 3'-5' exoribonuclease that plays an important role in tRNA 3'-end maturation. Removes nucleotide residues following the 3'-CCA terminus of tRNAs; can also add nucleotides to the ends of RNA molecules by using nucleoside diphosphates as substrates, but this may not be physiologically important. Probably plays a role in initiation of 16S rRNA degradation (leading to ribosome degradation) during starvation. The protein is Ribonuclease PH of Pseudomonas fluorescens (strain SBW25).